The sequence spans 182 residues: WUSCHEL-related homeobox 5 (182 aa).

The segment at 1-24 is disordered; sequence MSFSVKGRSLRGNNNGGTGTKCGR. A DNA-binding region (homeobox; WUS-type) is located at residues 20–84; the sequence is TKCGRWNPTV…NHKARERQKR (65 aa).

This sequence belongs to the WUS homeobox family. Specifically expressed in the central cells of a quiescent center (QC) of the root.

It localises to the nucleus. Functionally, transcription factor, which may be involved in the specification and maintenance of the stem cells (QC cells) in the root apical meristem (RAM). This chain is WUSCHEL-related homeobox 5 (WOX5), found in Arabidopsis thaliana (Mouse-ear cress).